The chain runs to 239 residues: tRNA (guanine-N(7)-)-methyltransferase (239 aa).

4 residues coordinate S-adenosyl-L-methionine: glutamate 69, glutamate 94, aspartate 121, and aspartate 144. Aspartate 144 is a catalytic residue. Position 148 (lysine 148) interacts with substrate. The tract at residues 150–155 (RHNKRR) is interaction with RNA. Residues aspartate 180 and 217–220 (TKFE) each bind substrate.

The protein belongs to the class I-like SAM-binding methyltransferase superfamily. TrmB family. In terms of assembly, monomer.

It catalyses the reaction guanosine(46) in tRNA + S-adenosyl-L-methionine = N(7)-methylguanosine(46) in tRNA + S-adenosyl-L-homocysteine. It participates in tRNA modification; N(7)-methylguanine-tRNA biosynthesis. Catalyzes the formation of N(7)-methylguanine at position 46 (m7G46) in tRNA. This chain is tRNA (guanine-N(7)-)-methyltransferase, found in Shigella flexneri serotype 5b (strain 8401).